A 449-amino-acid chain; its full sequence is Adenosylhomocysteinase (449 aa).

Ser2 carries the N-acetylserine modification. Residue Lys21 forms a Glycyl lysine isopeptide (Lys-Gly) (interchain with G-Cter in ubiquitin) linkage. Residues Thr58, Asp134, and Glu159 each coordinate substrate. 160–162 is an NAD(+) binding site; sequence TTT. Residues Lys189 and Asp193 each contribute to the substrate site. Residues Asn194, 223-228, Glu246, 302-304, and Asn349 contribute to the NAD(+) site; these read GYGDVG and IGH. A Phosphothreonine modification is found at Thr393. A Glycyl lysine isopeptide (Lys-Gly) (interchain with G-Cter in ubiquitin) cross-link involves residue Lys413.

The protein belongs to the adenosylhomocysteinase family. It depends on NAD(+) as a cofactor.

The enzyme catalyses S-adenosyl-L-homocysteine + H2O = L-homocysteine + adenosine. Its pathway is amino-acid biosynthesis; L-homocysteine biosynthesis; L-homocysteine from S-adenosyl-L-homocysteine: step 1/1. Its function is as follows. Adenosylhomocysteine is a competitive inhibitor of S-adenosyl-L-methionine-dependent methyl transferase reactions; therefore adenosylhomocysteinase may play a key role in the control of methylations via regulation of the intracellular concentration of adenosylhomocysteine. In Saccharomyces cerevisiae (strain ATCC 204508 / S288c) (Baker's yeast), this protein is Adenosylhomocysteinase (SAH1).